The following is a 358-amino-acid chain: MIPSKRILTDKDVKIWEESETREDILSFIESLAKAVEGFENDQVSEPVSDSVQSTIAVLTEIDKLIKLHPVIQDKNTSRFGKVEFRDFYDDVCEKADDLLSSHFPALTSEQIEQLSIYLQESWGNKRRIDYGSGHELNFICFLYGLTHYKIFDLQRDARNLVLVLFIEYLKIMREIETLYWLEPAGSHGVWGLDDYHFLPFLFGAFQLAPHKHLKPKSIHNEELVEMFADKYLYFGCIAFINSVKTSTSLRWHSPMLDDISGVKKWSKVAEGMIKMYKAEVLGKLPIMQHFYFSEFLVCPEGISEPRTHIHNGDEDDDQCCQDGAAHNTWGDCCGIKIPSLYAANAMEKQSHKPIPFD.

Belongs to the PTPA-type PPIase family.

The protein resides in the cytoplasm. It catalyses the reaction [protein]-peptidylproline (omega=180) = [protein]-peptidylproline (omega=0). PPIases accelerate the folding of proteins. It catalyzes the cis-trans isomerization of proline imidic peptide bonds in oligopeptides. Acts as a regulatory subunit for PP2A-like phosphatases modulating their activity or substrate specificity, probably by inducing a conformational change in the catalytic subunit, a direct target of the PPIase. Can reactivate inactive phosphatase PP2A-phosphatase methylesterase complexes (PP2Ai) in presence of ATP and Mg(2+) by dissociating the inactive form from the complex. The chain is Serine/threonine-protein phosphatase 2A activator 2 (RRD2) from Candida glabrata (strain ATCC 2001 / BCRC 20586 / JCM 3761 / NBRC 0622 / NRRL Y-65 / CBS 138) (Yeast).